Consider the following 343-residue polypeptide: Aspartate carbamoyltransferase catalytic subunit (343 aa).

The carbamoyl phosphate site is built by Arg91 and Thr92. Lys119 is a binding site for L-aspartate. Residues Arg141, His171, and Gln174 each coordinate carbamoyl phosphate. Arg204 and Arg259 together coordinate L-aspartate. Carbamoyl phosphate is bound by residues Gly300 and Pro301.

This sequence belongs to the aspartate/ornithine carbamoyltransferase superfamily. ATCase family. Heterododecamer (2C3:3R2) of six catalytic PyrB chains organized as two trimers (C3), and six regulatory PyrI chains organized as three dimers (R2).

It catalyses the reaction carbamoyl phosphate + L-aspartate = N-carbamoyl-L-aspartate + phosphate + H(+). The protein operates within pyrimidine metabolism; UMP biosynthesis via de novo pathway; (S)-dihydroorotate from bicarbonate: step 2/3. Catalyzes the condensation of carbamoyl phosphate and aspartate to form carbamoyl aspartate and inorganic phosphate, the committed step in the de novo pyrimidine nucleotide biosynthesis pathway. The protein is Aspartate carbamoyltransferase catalytic subunit of Burkholderia thailandensis (strain ATCC 700388 / DSM 13276 / CCUG 48851 / CIP 106301 / E264).